The primary structure comprises 96 residues: Putative septation protein SpoVG (96 aa).

The protein belongs to the SpoVG family.

Functionally, could be involved in septation. This Clostridium kluyveri (strain ATCC 8527 / DSM 555 / NBRC 12016 / NCIMB 10680 / K1) protein is Putative septation protein SpoVG.